A 474-amino-acid chain; its full sequence is Proline--tRNA ligase (474 aa).

Belongs to the class-II aminoacyl-tRNA synthetase family. ProS type 3 subfamily. Homodimer.

It is found in the cytoplasm. It carries out the reaction tRNA(Pro) + L-proline + ATP = L-prolyl-tRNA(Pro) + AMP + diphosphate. Functionally, catalyzes the attachment of proline to tRNA(Pro) in a two-step reaction: proline is first activated by ATP to form Pro-AMP and then transferred to the acceptor end of tRNA(Pro). The sequence is that of Proline--tRNA ligase from Onion yellows phytoplasma (strain OY-M).